A 125-amino-acid chain; its full sequence is Small ribosomal subunit protein uS13 (125 aa).

The interval 95-125 is disordered; it reads GLPLRGQRTKTNARTRKGKRKTVANKKIASK.

The protein belongs to the universal ribosomal protein uS13 family. In terms of assembly, part of the 30S ribosomal subunit. Forms a loose heterodimer with protein S19. Forms two bridges to the 50S subunit in the 70S ribosome.

Located at the top of the head of the 30S subunit, it contacts several helices of the 16S rRNA. In the 70S ribosome it contacts the 23S rRNA (bridge B1a) and protein L5 of the 50S subunit (bridge B1b), connecting the 2 subunits; these bridges are implicated in subunit movement. Contacts the tRNAs in the A and P-sites. The sequence is that of Small ribosomal subunit protein uS13 from Borreliella burgdorferi (strain ATCC 35210 / DSM 4680 / CIP 102532 / B31) (Borrelia burgdorferi).